A 459-amino-acid polypeptide reads, in one-letter code: UDP-N-acetylmuramoylalanine--D-glutamate ligase (459 aa).

118 to 124 lines the ATP pocket; the sequence is GTNGKTT.

Belongs to the MurCDEF family.

Its subcellular location is the cytoplasm. It carries out the reaction UDP-N-acetyl-alpha-D-muramoyl-L-alanine + D-glutamate + ATP = UDP-N-acetyl-alpha-D-muramoyl-L-alanyl-D-glutamate + ADP + phosphate + H(+). Its pathway is cell wall biogenesis; peptidoglycan biosynthesis. Cell wall formation. Catalyzes the addition of glutamate to the nucleotide precursor UDP-N-acetylmuramoyl-L-alanine (UMA). This chain is UDP-N-acetylmuramoylalanine--D-glutamate ligase, found in Desulfosudis oleivorans (strain DSM 6200 / JCM 39069 / Hxd3) (Desulfococcus oleovorans).